Here is a 325-residue protein sequence, read N- to C-terminus: Biotin synthase (325 aa).

The region spanning 36 to 254 is the Radical SAM core domain; sequence NEVQLAMLLS…IALARIMFPK (219 aa). C51, C55, and C58 together coordinate [4Fe-4S] cluster. Residues C95, C126, C186, and R258 each coordinate [2Fe-2S] cluster.

This sequence belongs to the radical SAM superfamily. Biotin synthase family. Homodimer. Requires [4Fe-4S] cluster as cofactor. [2Fe-2S] cluster serves as cofactor.

It catalyses the reaction (4R,5S)-dethiobiotin + (sulfur carrier)-SH + 2 reduced [2Fe-2S]-[ferredoxin] + 2 S-adenosyl-L-methionine = (sulfur carrier)-H + biotin + 2 5'-deoxyadenosine + 2 L-methionine + 2 oxidized [2Fe-2S]-[ferredoxin]. It functions in the pathway cofactor biosynthesis; biotin biosynthesis; biotin from 7,8-diaminononanoate: step 2/2. Functionally, catalyzes the conversion of dethiobiotin (DTB) to biotin by the insertion of a sulfur atom into dethiobiotin via a radical-based mechanism. This Neorickettsia sennetsu (strain ATCC VR-367 / Miyayama) (Ehrlichia sennetsu) protein is Biotin synthase.